The following is a 248-amino-acid chain: Large ribosomal subunit protein uL30B (248 aa).

The tract at residues 1–45 (MSQKKQKIQVEQKVPENVAKKTQRDSKLRDAVAKRRTERLAANKT) is disordered. Residues 8 to 41 (IQVEQKVPENVAKKTQRDSKLRDAVAKRRTERLA) show a composition bias toward basic and acidic residues.

It belongs to the universal ribosomal protein uL30 family.

Its function is as follows. Binds to G-rich structures in 28S rRNA and in mRNAs. Plays a regulatory role in the translation apparatus; inhibits cell-free translation of mRNAs. This Paramecium tetraurelia protein is Large ribosomal subunit protein uL30B (Rpl7-2).